Here is a 337-residue protein sequence, read N- to C-terminus: F-box protein At2g27310 (337 aa).

The F-box domain maps to 10–58; sequence DSISTLHSDIIQTQILTRLDGPTLASTATTSSYLQTLCTEEKLWQELSI.

This is F-box protein At2g27310 from Arabidopsis thaliana (Mouse-ear cress).